The primary structure comprises 402 residues: BTB and MATH domain-containing protein 40 (402 aa).

The disordered stretch occupies residues 1 to 25; it reads MSDRHLYGSDHSYLSSKPSCSSCRR. Low complexity predominate over residues 15-25; the sequence is SSKPSCSSCRR. Residues 43-177 form the MATH domain; that stretch reads VLTQRWTVCN…DKSLVISCHI (135 aa). The region spanning 222 to 295 is the BTB domain; the sequence is TDMTIVAGPL…IYAGVIKSDI (74 aa).

Interacts with cul-3.

It participates in protein modification; protein ubiquitination. Functionally, probable substrate-specific adapter of an E3 ubiquitin-protein ligase complex which mediates the ubiquitination and subsequent proteasomal degradation of target proteins. This chain is BTB and MATH domain-containing protein 40 (bath-40), found in Caenorhabditis elegans.